The primary structure comprises 264 residues: COP9 signalosome complex subunit 7b (264 aa).

Ala-2 is subject to N-acetylalanine. A PCI domain is found at 2 to 159; sequence AGEQKPSSNL…QLLEVDFCIG (158 aa). Residues 194–237 adopt a coiled-coil conformation; it reads RANQYKENHHRTQQQVEAEVSNIKKTLKATASSSAQEMEQQLAE. Over residues 223–232 the composition is skewed to polar residues; it reads TASSSAQEME. Positions 223 to 264 are disordered; sequence TASSSAQEMEQQLAERECPPHTEQRQPTKKMSKVKGLVSSRH. Over residues 235–248 the composition is skewed to basic and acidic residues; that stretch reads LAERECPPHTEQRQ.

It belongs to the CSN7/EIF3M family. CSN7 subfamily. In terms of assembly, component of the CSN complex, composed of COPS1/GPS1, COPS2, COPS3, COPS4, COPS5, COPS6, COPS7 (COPS7A or COPS7B) and COPS8 and COPS9. In the complex, it probably interacts directly with COPS1, COPS2, COPS4, COPS5, COPS6 and COPS8. Interacts with EIF3S6.

Its subcellular location is the cytoplasm. The protein resides in the nucleus. Its function is as follows. Component of the COP9 signalosome complex (CSN), a complex involved in various cellular and developmental processes. The CSN complex is an essential regulator of the ubiquitin (Ubl) conjugation pathway by mediating the deneddylation of the cullin subunits of SCF-type E3 ligase complexes, leading to decrease the Ubl ligase activity of SCF-type complexes such as SCF, CSA or DDB2. The complex is also involved in phosphorylation of p53/TP53, JUN, I-kappa-B-alpha/NFKBIA, ITPK1 and IRF8/ICSBP, possibly via its association with CK2 and PKD kinases. CSN-dependent phosphorylation of TP53 and JUN promotes and protects degradation by the Ubl system, respectively. The protein is COP9 signalosome complex subunit 7b (Cops7b) of Mus musculus (Mouse).